A 164-amino-acid chain; its full sequence is Ribosome maturation factor RimP (164 aa).

It belongs to the RimP family.

Its subcellular location is the cytoplasm. Required for maturation of 30S ribosomal subunits. This is Ribosome maturation factor RimP from Mesoplasma florum (strain ATCC 33453 / NBRC 100688 / NCTC 11704 / L1) (Acholeplasma florum).